A 168-amino-acid chain; its full sequence is Outer-membrane lipoprotein YfiB (168 aa).

Residues 1 to 25 (MLPQRLHPSRLLALALFSLVLGLAG) form the signal peptide. Cys-26 carries N-palmitoyl cysteine lipidation. Residue Cys-26 is the site of S-diacylglycerol cysteine attachment. The OmpA-like domain occupies 53–168 (EGWEFGMSSK…RRVAIIVPAE (116 aa)).

Belongs to the outer membrane OOP (TC 1.B.6) superfamily. As to quaternary structure, homodimer. Interacts with YfiR. The YfiB-YfiR complex is a 2:2 heterotetramer.

Its subcellular location is the cell outer membrane. With respect to regulation, both lipid anchor in the outer membrane and peptidoglycan binding are required for full activity. Once activated by certain cell stress, the dimeric YfiB transforms from a compact conformation to a stretched conformation, allowing the periplasmic domain of the membrane-anchored YfiB to penetrate the cell wall and sequester the YfiR dimer. GMP enhances the binding affinity between YfiB and YfiR. Activates the diguanylate cyclase TpbB/YfiN by sequestering YfiR at the outer membrane, which counteracts the YfiR-mediated repression of TpbB/YfiN at the inner membrane and leads to increased c-di-GMP production. May act as a sensor of envelope stress. Functionally, part of the YfiB-TpbB-YfiR (or yfiBNR) system, encoding a tripartite signaling module that modulates intracellular c-di-GMP levels. The system is a key regulator of the small colony variant (SCV) phenotype, and plays an important role in biofilm formation and in vivo persistence. The c-di-GMP produced by TpbB/YfiN stimulates the production of the Pel and Psl exopolysaccharides, which promotes surface attachment, generates an SCV phenotype and confers resistance against phagocytosis. This Pseudomonas aeruginosa (strain ATCC 15692 / DSM 22644 / CIP 104116 / JCM 14847 / LMG 12228 / 1C / PRS 101 / PAO1) protein is Outer-membrane lipoprotein YfiB.